A 66-amino-acid chain; its full sequence is Large ribosomal subunit protein bL33c (66 aa).

It belongs to the bacterial ribosomal protein bL33 family.

It localises to the plastid. It is found in the chloroplast. This Nandina domestica (Heavenly bamboo) protein is Large ribosomal subunit protein bL33c.